The primary structure comprises 293 residues: Cell division protein FtsQ (293 aa).

The Cytoplasmic portion of the chain corresponds to 1-27 (MRPLMRNRASERGVDPAPSRWAWRMQR). A helical membrane pass occupies residues 28 to 48 (LLLTPAFLLFLRAGVPVLVLF). The Periplasmic segment spans residues 49–293 (GAATWWLSDT…WWEIRQVSRQ (245 aa)). In terms of domain architecture, POTRA spans 81–149 (FMVQLMAVDG…GVLHIDVEPR (69 aa)).

This sequence belongs to the FtsQ/DivIB family. FtsQ subfamily.

It is found in the cell inner membrane. In terms of biological role, essential cell division protein. The sequence is that of Cell division protein FtsQ from Roseobacter litoralis (strain ATCC 49566 / DSM 6996 / JCM 21268 / NBRC 15278 / OCh 149).